The primary structure comprises 268 residues: Hydroxyethylthiazole kinase (268 aa).

Met-45 lines the substrate pocket. Positions 121 and 167 each coordinate ATP. Gly-194 is a substrate binding site.

It belongs to the Thz kinase family. The cofactor is Mg(2+).

The enzyme catalyses 5-(2-hydroxyethyl)-4-methylthiazole + ATP = 4-methyl-5-(2-phosphooxyethyl)-thiazole + ADP + H(+). The protein operates within cofactor biosynthesis; thiamine diphosphate biosynthesis; 4-methyl-5-(2-phosphoethyl)-thiazole from 5-(2-hydroxyethyl)-4-methylthiazole: step 1/1. Functionally, catalyzes the phosphorylation of the hydroxyl group of 4-methyl-5-beta-hydroxyethylthiazole (THZ). This chain is Hydroxyethylthiazole kinase, found in Bacillus thuringiensis (strain Al Hakam).